Consider the following 164-residue polypeptide: MTVLTIEEMAATLAPGQAIAGLDLGTKTIGLSMSDLGRRFATPRPVIRRAKFTIDAQALLDFAAKERVAGFVIGLPMNMDGSAGPRVQATRAFVRNMEEKTALPFVYWDERLSTVAAERTLLEMDVSRAKRAERIDSAAASFILQGALDRLSLLARSDGDEFSA.

The protein belongs to the YqgF nuclease family.

The protein resides in the cytoplasm. In terms of biological role, could be a nuclease involved in processing of the 5'-end of pre-16S rRNA. The protein is Putative pre-16S rRNA nuclease of Rhizobium etli (strain CIAT 652).